We begin with the raw amino-acid sequence, 371 residues long: 2-aminoethylphosphonate--pyruvate transaminase (371 aa).

An N6-(pyridoxal phosphate)lysine modification is found at Lys-198.

This sequence belongs to the class-V pyridoxal-phosphate-dependent aminotransferase family. PhnW subfamily. As to quaternary structure, homodimer. Pyridoxal 5'-phosphate is required as a cofactor.

The catalysed reaction is (2-aminoethyl)phosphonate + pyruvate = phosphonoacetaldehyde + L-alanine. Functionally, involved in phosphonate degradation. In Syntrophobacter fumaroxidans (strain DSM 10017 / MPOB), this protein is 2-aminoethylphosphonate--pyruvate transaminase.